Consider the following 108-residue polypeptide: Nascent polypeptide-associated complex protein (108 aa).

An NAC-A/B domain is found at 1 to 68; it reads MNPREIRRMM…LREVKKEVEQ (68 aa).

The protein belongs to the NAC-alpha family. As to quaternary structure, homodimer. Interacts with the ribosome. Binds ribosomal RNA.

Contacts the emerging nascent chain on the ribosome. The sequence is that of Nascent polypeptide-associated complex protein from Picrophilus torridus (strain ATCC 700027 / DSM 9790 / JCM 10055 / NBRC 100828 / KAW 2/3).